We begin with the raw amino-acid sequence, 117 residues long: Large ribosomal subunit protein bL20c (117 aa).

Belongs to the bacterial ribosomal protein bL20 family.

It is found in the plastid. The protein resides in the chloroplast. In terms of biological role, binds directly to 23S ribosomal RNA and is necessary for the in vitro assembly process of the 50S ribosomal subunit. It is not involved in the protein synthesizing functions of that subunit. The chain is Large ribosomal subunit protein bL20c from Populus alba (White poplar).